The chain runs to 310 residues: Olfactory receptor 5P1 (310 aa).

Over Met-1 to Val-25 the chain is Extracellular. Asn-5 carries an N-linked (GlcNAc...) asparagine glycan. Residues Ile-26–Ile-46 traverse the membrane as a helical segment. At Asn-47–Gln-54 the chain is on the cytoplasmic side. The chain crosses the membrane as a helical span at residues Leu-55–Thr-75. Topologically, residues Ser-76 to Ala-99 are extracellular. Cys-97 and Cys-189 are joined by a disulfide. The helical transmembrane segment at Gln-100–Tyr-120 threads the bilayer. Over Asp-121–Ser-133 the chain is Cytoplasmic. The helical transmembrane segment at Thr-134 to Val-154 threads the bilayer. Over Asn-155–Gly-196 the chain is Extracellular. The chain crosses the membrane as a helical span at residues Ile-197 to Ser-217. Residues Tyr-218–Ala-237 lie on the Cytoplasmic side of the membrane. Residues Phe-238–Ile-258 traverse the membrane as a helical segment. Residues Tyr-259 to Asn-271 lie on the Extracellular side of the membrane. Residues Arg-272 to Leu-292 form a helical membrane-spanning segment. Residues Arg-293–Ser-310 lie on the Cytoplasmic side of the membrane.

The protein belongs to the G-protein coupled receptor 1 family.

It is found in the cell membrane. Its function is as follows. Potential odorant receptor. The protein is Olfactory receptor 5P1 of Mus musculus (Mouse).